Here is a 99-residue protein sequence, read N- to C-terminus: Putative membrane protein insertion efficiency factor (99 aa).

This sequence belongs to the UPF0161 family.

The protein localises to the cell inner membrane. In terms of biological role, could be involved in insertion of integral membrane proteins into the membrane. The protein is Putative membrane protein insertion efficiency factor of Salinibacter ruber (strain DSM 13855 / M31).